Reading from the N-terminus, the 291-residue chain is Ribosome maturation factor RimP (291 aa).

A disordered region spans residues 188–291 (ERGLGEDEEF…GGKPKAKETH (104 aa)). Residues 193–211 (EDEEFEDDADEVFEGDEAD) show a composition bias toward acidic residues. Basic and acidic residues-rich tracts occupy residues 212–237 (EKAA…EKRA) and 245–254 (AKSEKAEKSQ).

It belongs to the RimP family.

Its subcellular location is the cytoplasm. In terms of biological role, required for maturation of 30S ribosomal subunits. The chain is Ribosome maturation factor RimP from Azorhizobium caulinodans (strain ATCC 43989 / DSM 5975 / JCM 20966 / LMG 6465 / NBRC 14845 / NCIMB 13405 / ORS 571).